Consider the following 356-residue polypeptide: MAEPLLTEHQHQPQTSNCTGAAVVHEEHTSERPPSAEERVPKEDSRWQSRASLQSGSRPGQEGEGGLKHQLPPLQTNACPELSSLEKGEKGQNGEDLSTGGASPSAEGEPMSESLVQPGHDSEATKQEAPAAGGEEPWGQQQRQLGKKKHRRRPSKKKRHWKPYYKLTWEEKKKFDEKQSLRASRVRAEMFAKGQPVAPYNTTQFLMDDHDQEEPDLKTGLYPKRAAAKSDDTSDEDFVEEAGEEDGGSDGMGGDGSEFLQRDFSETYERYHAESLQNMSKQELIKEYLELEKCLSRKEDENNRLRLESKRLGGVDARVRELELELDRLRAENLQLLTENELHRQQERAPLSKFGD.

2 stretches are compositionally biased toward basic and acidic residues: residues 1 to 11 (MAEPLLTEHQH) and 24 to 47 (VHEE…DSRW). The interval 1–162 (MAEPLLTEHQ…RPSKKKRHWK (162 aa)) is disordered. Polar residues predominate over residues 48–58 (QSRASLQSGSR). Positions 84–93 (SLEKGEKGQN) are enriched in basic and acidic residues. Residues Ser98 and Ser103 each carry the phosphoserine modification. Residues 145–162 (LGKKKHRRRPSKKKRHWK) show a composition bias toward basic residues. The segment at 147-174 (KKKHRRRPSKKKRHWKPYYKLTWEEKKK) is basic region; mediates nuclear localization and interaction with 7SK snRNA and NR3C1. Residues 199–202 (PYNT) are interaction with P-TEFb. An autoinhibitory acidic region; in absence of 7SK snRNA interacts with the basic region preventing interaction with P-TEFb and modulating subcellular localization region spans residues 207–247 (MDDHDQEEPDLKTGLYPKRAAAKSDDTSDEDFVEEAGEEDG). Residues 210-259 (HDQEEPDLKTGLYPKRAAAKSDDTSDEDFVEEAGEEDGGSDGMGGDGSEF) form a disordered region. Phosphoserine is present on Ser230. Thr233 carries the phosphothreonine modification. Positions 233–248 (TSDEDFVEEAGEEDGG) are enriched in acidic residues. Ser234, Ser249, and Ser257 each carry phosphoserine. Residues 280-346 (SKQELIKEYL…LTENELHRQQ (67 aa)) are a coiled coil. The mediates interaction with CCNT1 stretch occupies residues 283–311 (ELIKEYLELEKCLSRKEDENNRLRLESKR). The tract at residues 307 to 352 (LESKRLGGVDARVRELELELDRLRAENLQLLTENELHRQQERAPLS) is required for inhibition of ESR1-dependent transcription.

It belongs to the HEXIM family. As to quaternary structure, homooligomer and heterooligomer with HEXIM2; probably dimeric. Core component of the 7SK RNP complex, at least composed of 7SK RNA, LARP7, MEPCE, HEXIM1 (or HEXIM2) and P-TEFb (composed of CDK9 and CCNT1/cyclin-T1). Interacts with the N-CoR complex through NCOR1. Interacts with ESR1 and NR3C1. May interact with NF-kappa-B through RELA. Interacts with CCNT2; mediates formation of a tripartite complex with KPNA2. Part of the HDP-RNP complex composed of at least HEXIM1, PRKDC, XRCC5, XRCC6, paraspeckle proteins (SFPQ, NONO, PSPC1, RBM14, and MATR3) and NEAT1 non-coding RNA. In terms of tissue distribution, widely expressed with higher expression in heart, skeletal muscle and brain (at protein level).

It localises to the nucleus. It is found in the cytoplasm. Transcriptional regulator which functions as a general RNA polymerase II transcription inhibitor. Core component of the 7SK RNP complex: in cooperation with 7SK snRNA sequesters P-TEFb in a large inactive 7SK snRNP complex preventing RNA polymerase II phosphorylation and subsequent transcriptional elongation. May also regulate NF-kappa-B, ESR1, NR3C1 and CIITA-dependent transcriptional activity. Plays a role in the regulation of DNA virus-mediated innate immune response by assembling into the HDP-RNP complex, a complex that serves as a platform for IRF3 phosphorylation and subsequent innate immune response activation through the cGAS-STING pathway. In Mus musculus (Mouse), this protein is Protein HEXIM1 (Hexim1).